Here is a 398-residue protein sequence, read N- to C-terminus: 8-amino-7-oxononanoate synthase (398 aa).

Arginine 26 is a substrate binding site. 113–114 (GF) lines the pyridoxal 5'-phosphate pocket. Histidine 138 is a binding site for substrate. Residues serine 181, histidine 209, and threonine 238 each contribute to the pyridoxal 5'-phosphate site. Position 241 is an N6-(pyridoxal phosphate)lysine (lysine 241). Threonine 355 contacts substrate.

This sequence belongs to the class-II pyridoxal-phosphate-dependent aminotransferase family. BioF subfamily. As to quaternary structure, homodimer. It depends on pyridoxal 5'-phosphate as a cofactor.

The catalysed reaction is 6-carboxyhexanoyl-[ACP] + L-alanine + H(+) = (8S)-8-amino-7-oxononanoate + holo-[ACP] + CO2. It participates in cofactor biosynthesis; biotin biosynthesis. Functionally, catalyzes the decarboxylative condensation of pimeloyl-[acyl-carrier protein] and L-alanine to produce 8-amino-7-oxononanoate (AON), [acyl-carrier protein], and carbon dioxide. The sequence is that of 8-amino-7-oxononanoate synthase from Aeromonas hydrophila subsp. hydrophila (strain ATCC 7966 / DSM 30187 / BCRC 13018 / CCUG 14551 / JCM 1027 / KCTC 2358 / NCIMB 9240 / NCTC 8049).